Here is a 408-residue protein sequence, read N- to C-terminus: Arginine biosynthesis bifunctional protein ArgJ (408 aa).

Threonine 156, lysine 182, threonine 193, glutamate 279, asparagine 403, and serine 408 together coordinate substrate. Threonine 193 acts as the Nucleophile in catalysis.

The protein belongs to the ArgJ family. As to quaternary structure, heterotetramer of two alpha and two beta chains.

It is found in the cytoplasm. The enzyme catalyses N(2)-acetyl-L-ornithine + L-glutamate = N-acetyl-L-glutamate + L-ornithine. It carries out the reaction L-glutamate + acetyl-CoA = N-acetyl-L-glutamate + CoA + H(+). Its pathway is amino-acid biosynthesis; L-arginine biosynthesis; L-ornithine and N-acetyl-L-glutamate from L-glutamate and N(2)-acetyl-L-ornithine (cyclic): step 1/1. The protein operates within amino-acid biosynthesis; L-arginine biosynthesis; N(2)-acetyl-L-ornithine from L-glutamate: step 1/4. In terms of biological role, catalyzes two activities which are involved in the cyclic version of arginine biosynthesis: the synthesis of N-acetylglutamate from glutamate and acetyl-CoA as the acetyl donor, and of ornithine by transacetylation between N(2)-acetylornithine and glutamate. This Dechloromonas aromatica (strain RCB) protein is Arginine biosynthesis bifunctional protein ArgJ.